We begin with the raw amino-acid sequence, 444 residues long: Adenylosuccinate synthetase (444 aa).

GTP is bound by residues 13–19 (GDEGKGK) and 41–43 (GHT). Residue Asp14 is the Proton acceptor of the active site. 2 residues coordinate Mg(2+): Asp14 and Gly41. IMP-binding positions include 14-17 (DEGK), 39-42 (NAGH), Thr129, Arg143, Gln224, Thr239, and Arg303. Catalysis depends on His42, which acts as the Proton donor. Residue 299–305 (TTTGRRR) participates in substrate binding. Residues Arg305, 331-333 (KLD), and 413-415 (SLG) each bind GTP.

It belongs to the adenylosuccinate synthetase family. As to quaternary structure, homodimer. It depends on Mg(2+) as a cofactor.

The protein localises to the cytoplasm. It carries out the reaction IMP + L-aspartate + GTP = N(6)-(1,2-dicarboxyethyl)-AMP + GDP + phosphate + 2 H(+). It participates in purine metabolism; AMP biosynthesis via de novo pathway; AMP from IMP: step 1/2. Its function is as follows. Plays an important role in the de novo pathway of purine nucleotide biosynthesis. Catalyzes the first committed step in the biosynthesis of AMP from IMP. The protein is Adenylosuccinate synthetase of Synechocystis sp. (strain ATCC 27184 / PCC 6803 / Kazusa).